The chain runs to 382 residues: Galactokinase (382 aa).

34–37 (EHTD) contributes to the substrate binding site. 124-130 (GAGLSSS) is an ATP binding site. The Mg(2+) site is built by Ser-130 and Glu-162. Catalysis depends on Asp-174, which acts as the Proton acceptor. Tyr-223 contacts substrate.

The protein belongs to the GHMP kinase family. GalK subfamily.

It localises to the cytoplasm. The enzyme catalyses alpha-D-galactose + ATP = alpha-D-galactose 1-phosphate + ADP + H(+). Its pathway is carbohydrate metabolism; galactose metabolism. Functionally, catalyzes the transfer of the gamma-phosphate of ATP to D-galactose to form alpha-D-galactose-1-phosphate (Gal-1-P). This chain is Galactokinase, found in Escherichia fergusonii (strain ATCC 35469 / DSM 13698 / CCUG 18766 / IAM 14443 / JCM 21226 / LMG 7866 / NBRC 102419 / NCTC 12128 / CDC 0568-73).